The sequence spans 393 residues: uncharacterized protein (393 aa).

Over methionine 1–leucine 17 the chain is Cytoplasmic. A helical transmembrane segment spans residues leucine 18–phenylalanine 38. Topologically, residues glutamate 39–proline 46 are vacuolar. A helical membrane pass occupies residues phenylalanine 47 to alanine 67. Residues valine 68–glutamate 132 are Cytoplasmic-facing. Phosphoserine is present on serine 93. A helical membrane pass occupies residues phenylalanine 133–valine 153. At alanine 154–glutamine 156 the chain is on the vacuolar side. A helical transmembrane segment spans residues threonine 157–valine 176. Over glutamate 177–serine 182 the chain is Cytoplasmic. The chain crosses the membrane as a helical span at residues lysine 183 to serine 200. Residues aspartate 201–aspartate 219 are Vacuolar-facing. The chain crosses the membrane as a helical span at residues alanine 220–tyrosine 240. The Cytoplasmic segment spans residues serine 241–lysine 257. A helical membrane pass occupies residues isoleucine 258 to leucine 278. Topologically, residues aspartate 279 to proline 292 are vacuolar. A helical membrane pass occupies residues lysine 293–alanine 313. Residues lysine 314–proline 321 lie on the Cytoplasmic side of the membrane. The chain crosses the membrane as a helical span at residues leucine 322 to phenylalanine 342. The Vacuolar segment spans residues lysine 343 to lysine 345. Residues threonine 346–asparagine 366 traverse the membrane as a helical segment. Residues lysine 367 to asparagine 393 are Cytoplasmic-facing.

Belongs to the TPT transporter family.

The protein localises to the vacuole membrane. This is an uncharacterized protein from Saccharomyces cerevisiae (strain ATCC 204508 / S288c) (Baker's yeast).